The following is a 296-amino-acid chain: Nucleotide-binding protein SEQ_0857 (296 aa).

An ATP-binding site is contributed by glycine 13–threonine 20. Aspartate 63 to serine 66 contributes to the GTP binding site.

This sequence belongs to the RapZ-like family.

In terms of biological role, displays ATPase and GTPase activities. The chain is Nucleotide-binding protein SEQ_0857 from Streptococcus equi subsp. equi (strain 4047).